Here is a 237-residue protein sequence, read N- to C-terminus: tRNA (guanine-N(1)-)-methyltransferase (237 aa).

Residues Gly-113 and 133-138 (MGDYIL) each bind S-adenosyl-L-methionine.

Belongs to the RNA methyltransferase TrmD family. As to quaternary structure, homodimer.

Its subcellular location is the cytoplasm. It catalyses the reaction guanosine(37) in tRNA + S-adenosyl-L-methionine = N(1)-methylguanosine(37) in tRNA + S-adenosyl-L-homocysteine + H(+). Functionally, specifically methylates guanosine-37 in various tRNAs. The polypeptide is tRNA (guanine-N(1)-)-methyltransferase (Wolinella succinogenes (strain ATCC 29543 / DSM 1740 / CCUG 13145 / JCM 31913 / LMG 7466 / NCTC 11488 / FDC 602W) (Vibrio succinogenes)).